We begin with the raw amino-acid sequence, 247 residues long: 5-oxoprolinase subunit A (247 aa).

This sequence belongs to the LamB/PxpA family. As to quaternary structure, forms a complex composed of PxpA, PxpB and PxpC.

The enzyme catalyses 5-oxo-L-proline + ATP + 2 H2O = L-glutamate + ADP + phosphate + H(+). In terms of biological role, catalyzes the cleavage of 5-oxoproline to form L-glutamate coupled to the hydrolysis of ATP to ADP and inorganic phosphate. This chain is 5-oxoprolinase subunit A, found in Histophilus somni (strain 129Pt) (Haemophilus somnus).